The primary structure comprises 1690 residues: rRNA biogenesis protein rrp5 (1690 aa).

Disordered stretches follow at residues 1 to 42 (MAGN…GASS) and 59 to 90 (FMES…ELDN). Polar residues predominate over residues 11–32 (ASEGSDSQGNERISSLSANEAT). The segment covering 72-83 (KTRPKKKGSKKS) has biased composition (basic residues). 13 consecutive S1 motif domains span residues 109 to 209 (GSLI…LSLK), 226 to 289 (GSMI…LTAT), 306 to 376 (GDYI…VSFL), 398 to 473 (GFIV…LSFQ), 490 to 559 (GQFV…LTLK), 579 to 648 (GTQT…VGCR), 666 to 739 (GSVL…LSLK), 761 to 830 (GIKY…MSFK), 866 to 942 (GKIT…ISHR), 973 to 1044 (GDEV…IGPL), 1053 to 1122 (GSRL…LSAR), 1147 to 1216 (GDIC…MSLK), and 1236 to 1307 (GSNL…LGLK). The tract at residues 1313–1424 (SDSDISMSDN…EEKDLDEIPS (112 aa)) is disordered. Acidic residues-rich tracts occupy residues 1348 to 1367 (QSEE…EEEP), 1390 to 1400 (DTEDSEDEEDE), and 1412 to 1421 (FDDEEKDLDE). A Phosphothreonine modification is found at T1391. S1394 bears the Phosphoserine mark. 3 HAT repeats span residues 1420-1452 (DEIP…YHLN), 1526-1558 (GKVD…FLLN), and 1596-1628 (GDPE…MEMK). S1684 and S1686 each carry phosphoserine.

In terms of assembly, component of the ribosomal small subunit (SSU) processome.

Its subcellular location is the nucleus. The protein resides in the nucleolus. Its function is as follows. Involved in the biogenesis of rRNA. Required for the formation of 18S and 5.8S rRNA. The polypeptide is rRNA biogenesis protein rrp5 (Schizosaccharomyces pombe (strain 972 / ATCC 24843) (Fission yeast)).